A 782-amino-acid polypeptide reads, in one-letter code: LPS-assembly protein LptD (782 aa).

Residues 1-23 form the signal peptide; sequence MNKKHTLISLAILTALYSQQSLA.

This sequence belongs to the LptD family. Component of the lipopolysaccharide transport and assembly complex. Interacts with LptE and LptA.

It is found in the cell outer membrane. Together with LptE, is involved in the assembly of lipopolysaccharide (LPS) at the surface of the outer membrane. This Haemophilus influenzae (strain 86-028NP) protein is LPS-assembly protein LptD.